The following is a 376-amino-acid chain: Chaperone protein DnaJ (376 aa).

Residues 5–70 (DFYEVLGVGR…DKKAAYDQFG (66 aa)) form the J domain. The CR-type zinc-finger motif lies at 132–210 (GLTKELRIPT…CHGEGRVEKS (79 aa)). Positions 145, 148, 162, 165, 184, 187, 198, and 201 each coordinate Zn(2+). CXXCXGXG motif repeat units follow at residues 145–152 (CDACDGSG), 162–169 (CGTCHGQG), 184–191 (CPTCHGRG), and 198–205 (CNKCHGEG).

The protein belongs to the DnaJ family. As to quaternary structure, homodimer. Requires Zn(2+) as cofactor.

The protein resides in the cytoplasm. Functionally, participates actively in the response to hyperosmotic and heat shock by preventing the aggregation of stress-denatured proteins and by disaggregating proteins, also in an autonomous, DnaK-independent fashion. Unfolded proteins bind initially to DnaJ; upon interaction with the DnaJ-bound protein, DnaK hydrolyzes its bound ATP, resulting in the formation of a stable complex. GrpE releases ADP from DnaK; ATP binding to DnaK triggers the release of the substrate protein, thus completing the reaction cycle. Several rounds of ATP-dependent interactions between DnaJ, DnaK and GrpE are required for fully efficient folding. Also involved, together with DnaK and GrpE, in the DNA replication of plasmids through activation of initiation proteins. This Shewanella halifaxensis (strain HAW-EB4) protein is Chaperone protein DnaJ.